The chain runs to 205 residues: Metalloproteinase inhibitor 1 (205 aa).

Positions 1-24 (MMAPFASLASGILLLLSLIASSKA) are cleaved as a signal peptide. Cys25 is a Zn(2+) binding site. Residues 25 to 28 (CSCA) form an involved in metalloproteinase-binding region. Intrachain disulfides connect Cys25–Cys94, Cys27–Cys123, Cys37–Cys148, Cys151–Cys197, Cys156–Cys161, and Cys169–Cys189. The region spanning 25–148 (CSCAPPHPQT…AFSKTYSAGC (124 aa)) is the NTR domain. N-linked (GlcNAc...) asparagine glycosylation is present at Asn54. The involved in metalloproteinase-binding stretch occupies residues 91–92 (ES). An N-linked (GlcNAc...) asparagine glycan is attached at Asn102. Position 179 is a phosphoserine (Ser179).

This sequence belongs to the protease inhibitor I35 (TIMP) family. Interacts with MMP1, MMP3, MMP10 and MMP13, but has only very low affinity for MMP14. Interacts with CD63; identified in a complex with CD63 and ITGB1. Post-translationally, the activity of TIMP1 is dependent on the presence of disulfide bonds. N-glycosylated. As to expression, found in fetal and adult tissues. Highest levels are found in bone. Also found in lung, ovary and uterus.

The protein localises to the secreted. Its function is as follows. Metalloproteinase inhibitor that functions by forming one to one complexes with target metalloproteinases, such as collagenases, and irreversibly inactivates them by binding to their catalytic zinc cofactor. Acts on MMP1, MMP2, MMP3, MMP7, MMP8, MMP9, MMP10, MMP11, MMP12, MMP13 and MMP16. Does not act on MMP14. Also functions as a growth factor that regulates cell differentiation, migration and cell death and activates cellular signaling cascades via CD63 and ITGB1. Plays a role in integrin signaling. The sequence is that of Metalloproteinase inhibitor 1 (Timp1) from Mus musculus (Mouse).